The sequence spans 310 residues: Putative methyltransferase mtx subunit H (310 aa).

The protein belongs to the MtrH family. In terms of assembly, may be part of a complex composed of 3 subunits; MtxA, MtxH and MtxX.

This chain is Putative methyltransferase mtx subunit H (mtxH), found in Methanosarcina mazei (strain ATCC BAA-159 / DSM 3647 / Goe1 / Go1 / JCM 11833 / OCM 88) (Methanosarcina frisia).